A 579-amino-acid polypeptide reads, in one-letter code: V-type ATP synthase alpha chain (579 aa).

Residue 238-245 participates in ATP binding; that stretch reads GPFGAGKT.

This sequence belongs to the ATPase alpha/beta chains family.

It carries out the reaction ATP + H2O + 4 H(+)(in) = ADP + phosphate + 5 H(+)(out). Its function is as follows. Produces ATP from ADP in the presence of a proton gradient across the membrane. The V-type alpha chain is a catalytic subunit. The protein is V-type ATP synthase alpha chain of Borrelia hermsii (strain HS1 / DAH).